Reading from the N-terminus, the 179-residue chain is ATP synthase subunit b (179 aa).

Residues 29-48 (VINLAILIGVLVYFGRGVLG) traverse the membrane as a helical segment.

This sequence belongs to the ATPase B chain family. As to quaternary structure, F-type ATPases have 2 components, F(1) - the catalytic core - and F(0) - the membrane proton channel. F(1) has five subunits: alpha(3), beta(3), gamma(1), delta(1), epsilon(1). F(0) has four main subunits: a(1), b(1), b'(1) and c(10-14). The alpha and beta chains form an alternating ring which encloses part of the gamma chain. F(1) is attached to F(0) by a central stalk formed by the gamma and epsilon chains, while a peripheral stalk is formed by the delta, b and b' chains.

Its subcellular location is the cellular thylakoid membrane. Functionally, f(1)F(0) ATP synthase produces ATP from ADP in the presence of a proton or sodium gradient. F-type ATPases consist of two structural domains, F(1) containing the extramembraneous catalytic core and F(0) containing the membrane proton channel, linked together by a central stalk and a peripheral stalk. During catalysis, ATP synthesis in the catalytic domain of F(1) is coupled via a rotary mechanism of the central stalk subunits to proton translocation. In terms of biological role, component of the F(0) channel, it forms part of the peripheral stalk, linking F(1) to F(0). Its function is as follows. The complex from the organism is particularly stable to disruption and remains functional after 6 hrs at 55 degrees Celsius. This is ATP synthase subunit b from Thermosynechococcus vestitus (strain NIES-2133 / IAM M-273 / BP-1).